A 404-amino-acid polypeptide reads, in one-letter code: Phosphopentomutase (404 aa).

6 residues coordinate Mn(2+): Asp10, Asp303, His308, Asp344, His345, and His356.

This sequence belongs to the phosphopentomutase family. Mn(2+) is required as a cofactor.

The protein localises to the cytoplasm. The enzyme catalyses 2-deoxy-alpha-D-ribose 1-phosphate = 2-deoxy-D-ribose 5-phosphate. It catalyses the reaction alpha-D-ribose 1-phosphate = D-ribose 5-phosphate. The protein operates within carbohydrate degradation; 2-deoxy-D-ribose 1-phosphate degradation; D-glyceraldehyde 3-phosphate and acetaldehyde from 2-deoxy-alpha-D-ribose 1-phosphate: step 1/2. In terms of biological role, isomerase that catalyzes the conversion of deoxy-ribose 1-phosphate (dRib-1-P) and ribose 1-phosphate (Rib-1-P) to deoxy-ribose 5-phosphate (dRib-5-P) and ribose 5-phosphate (Rib-5-P), respectively. The sequence is that of Phosphopentomutase from Shewanella oneidensis (strain ATCC 700550 / JCM 31522 / CIP 106686 / LMG 19005 / NCIMB 14063 / MR-1).